The following is a 96-amino-acid chain: Small ribosomal subunit protein bS6 (96 aa).

This sequence belongs to the bacterial ribosomal protein bS6 family.

Binds together with bS18 to 16S ribosomal RNA. In Streptococcus pyogenes serotype M1, this protein is Small ribosomal subunit protein bS6.